The chain runs to 377 residues: Queuine tRNA-ribosyltransferase (377 aa).

The active-site Proton acceptor is the D92. Residues 92–96 (DSGGF), D146, Q190, and G217 each bind substrate. The RNA binding stretch occupies residues 248 to 254 (GVGRPED). The Nucleophile role is filled by D267. Residues 272–276 (TRHAR) are RNA binding; important for wobble base 34 recognition. Zn(2+)-binding residues include C305, C307, C310, and H337.

The protein belongs to the queuine tRNA-ribosyltransferase family. As to quaternary structure, homodimer. Within each dimer, one monomer is responsible for RNA recognition and catalysis, while the other monomer binds to the replacement base PreQ1. The cofactor is Zn(2+).

It carries out the reaction 7-aminomethyl-7-carbaguanine + guanosine(34) in tRNA = 7-aminomethyl-7-carbaguanosine(34) in tRNA + guanine. It functions in the pathway tRNA modification; tRNA-queuosine biosynthesis. In terms of biological role, catalyzes the base-exchange of a guanine (G) residue with the queuine precursor 7-aminomethyl-7-deazaguanine (PreQ1) at position 34 (anticodon wobble position) in tRNAs with GU(N) anticodons (tRNA-Asp, -Asn, -His and -Tyr). Catalysis occurs through a double-displacement mechanism. The nucleophile active site attacks the C1' of nucleotide 34 to detach the guanine base from the RNA, forming a covalent enzyme-RNA intermediate. The proton acceptor active site deprotonates the incoming PreQ1, allowing a nucleophilic attack on the C1' of the ribose to form the product. After dissociation, two additional enzymatic reactions on the tRNA convert PreQ1 to queuine (Q), resulting in the hypermodified nucleoside queuosine (7-(((4,5-cis-dihydroxy-2-cyclopenten-1-yl)amino)methyl)-7-deazaguanosine). The chain is Queuine tRNA-ribosyltransferase from Xylella fastidiosa (strain Temecula1 / ATCC 700964).